The sequence spans 673 residues: Xyloglucan glycosyltransferase 4 (673 aa).

2 helical membrane-spanning segments follow: residues 90-110 and 144-164; these read FIKACLVISIIALSIEIVAHF and IAPLVISLSRFCTVLFLIQSL. Residue Asp-238 is part of the active site. Positions 297 and 299 each coordinate substrate. Residue Asp-391 is part of the active site. Transmembrane regions (helical) follow at residues 469–489 and 494–514; these read LILPFYSFTLFCIILPLTMFI and LPLWIICYVPIFISLLNILPS. Ser-581 carries the phosphoserine modification. The next 2 helical transmembrane spans lie at 623 to 643 and 648 to 668; these read VFKKELGLAFLLLTAAARSFL and LHFYFLLFQGLSFLVVGLDLI.

It belongs to the glycosyltransferase 2 family. Plant cellulose synthase-like C subfamily. In terms of assembly, homodimer. Interacts with XXT5. Interacts with FUT1, MUR3 and XLT2. As to expression, expressed in seedlings, roots, leaves, stems, flowers and seeds.

It localises to the golgi apparatus membrane. Its function is as follows. Beta-1,4-glucan synthase rather involved in the synthesis of the xyloglucan backbone than cellulose. Seems to work simultaneously with xyloglucan 6-xylosyltransferase. Xyloglucan is a noncellulosic polysaccharides of plant cell wall and consists of a glucan backbone substituted by xylose, galactose and fucose. Associates with other xyloglucan-synthesizing enzymes to form multiprotein complexes for xyloglucan synthesis in the Golgi. The protein is Xyloglucan glycosyltransferase 4 of Arabidopsis thaliana (Mouse-ear cress).